The sequence spans 311 residues: Ribonuclease HIII (311 aa).

Positions 95 to 311 constitute an RNase H type-2 domain; that stretch reads MSIVGSDEVG…NTEKALRLLR (217 aa). D101, E102, and D206 together coordinate a divalent metal cation.

Belongs to the RNase HII family. RnhC subfamily. Mn(2+) is required as a cofactor. Mg(2+) serves as cofactor.

The protein localises to the cytoplasm. The enzyme catalyses Endonucleolytic cleavage to 5'-phosphomonoester.. In terms of biological role, endonuclease that specifically degrades the RNA of RNA-DNA hybrids. The sequence is that of Ribonuclease HIII from Bacillus cereus (strain ATCC 14579 / DSM 31 / CCUG 7414 / JCM 2152 / NBRC 15305 / NCIMB 9373 / NCTC 2599 / NRRL B-3711).